Consider the following 357-residue polypeptide: Cytosolic Fe-S cluster assembly factor NAR1 (357 aa).

[4Fe-4S] cluster-binding residues include Cys14, Cys28, Cys31, Cys34, Cys129, Cys172, Cys297, and Cys301.

It belongs to the NARF family.

Its function is as follows. Component of the cytosolic Fe/S protein assembly machinery. May play a role in the transfer of pre-assembled Fe/S clusters to target apoproteins. The polypeptide is Cytosolic Fe-S cluster assembly factor NAR1 (NAR1) (Encephalitozoon cuniculi (strain GB-M1) (Microsporidian parasite)).